The chain runs to 72 residues: MIIPWQGLAPDTLDNLIESFVLREGTDYGEHERSLEQKVADVKLQLQSGEAVLVWSELHETVNIMPKKQFRE.

The protein belongs to the UPF0270 family.

The chain is UPF0270 protein YheU from Salmonella dublin (strain CT_02021853).